The sequence spans 625 residues: Glucose dehydrogenase [FAD, quinone] (625 aa).

The signal sequence occupies residues 1–42; it reads MSASASACDCLVGVPTGPTLASTCGGSAFMLFMGLLEVFIRS. 66–95 is an FAD binding site; it reads DFIVIGGGSAGSVVASRLSEVPQWKVLLIE. His-544 functions as the Proton acceptor in the catalytic mechanism. Position 613 (Sec-613) is a non-standard amino acid, selenocysteine.

The protein belongs to the GMC oxidoreductase family. FAD serves as cofactor.

It localises to the secreted. The catalysed reaction is a quinone + D-glucose = D-glucono-1,5-lactone + a quinol. Its function is as follows. Essential for cuticular modification during development. This chain is Glucose dehydrogenase [FAD, quinone] (Gld), found in Drosophila melanogaster (Fruit fly).